The primary structure comprises 415 residues: Serine hydroxymethyltransferase (415 aa).

Residues L121 and 125 to 127 each bind (6S)-5,6,7,8-tetrahydrofolate; that span reads GHL. Position 229 is an N6-(pyridoxal phosphate)lysine (K229). 352-354 serves as a coordination point for (6S)-5,6,7,8-tetrahydrofolate; that stretch reads TPF.

It belongs to the SHMT family. As to quaternary structure, homodimer. The cofactor is pyridoxal 5'-phosphate.

The protein resides in the cytoplasm. The catalysed reaction is (6R)-5,10-methylene-5,6,7,8-tetrahydrofolate + glycine + H2O = (6S)-5,6,7,8-tetrahydrofolate + L-serine. Its pathway is one-carbon metabolism; tetrahydrofolate interconversion. It functions in the pathway amino-acid biosynthesis; glycine biosynthesis; glycine from L-serine: step 1/1. In terms of biological role, catalyzes the reversible interconversion of serine and glycine with tetrahydrofolate (THF) serving as the one-carbon carrier. This reaction serves as the major source of one-carbon groups required for the biosynthesis of purines, thymidylate, methionine, and other important biomolecules. Also exhibits THF-independent aldolase activity toward beta-hydroxyamino acids, producing glycine and aldehydes, via a retro-aldol mechanism. In Chromobacterium violaceum (strain ATCC 12472 / DSM 30191 / JCM 1249 / CCUG 213 / NBRC 12614 / NCIMB 9131 / NCTC 9757 / MK), this protein is Serine hydroxymethyltransferase.